Reading from the N-terminus, the 409-residue chain is Sprouty-related, EVH1 domain-containing protein 2 (409 aa).

The WH1 domain occupies 5–121 (APPEDDSYIV…RGVRKAIEDL (117 aa)). The tract at residues 121–170 (LTEGSTTSSSTIHNEAELGDDDVFATSTDSSSNSSQKREPPVRTIASPLP) is disordered. Polar residues predominate over residues 123–133 (EGSTTSSSTIH). Residues 146–155 (TSTDSSSNSS) are compositionally biased toward low complexity. In terms of domain architecture, KBD spans 199-253 (PHRHVSFPDDDDEIVRINPRERNWLTGYEDYRQAPIHRKYPDTESIDSYVRFAKS). An SPR domain is found at 299–407 (RCIYCRDMFN…CGCCGGKHKA (109 aa)).

The protein resides in the cell membrane. It localises to the cytoplasmic vesicle. The protein localises to the secretory vesicle membrane. It is found in the cytoplasm. Functionally, negatively regulates Ras signaling pathways and downstream activation of MAP kinases. This is Sprouty-related, EVH1 domain-containing protein 2 (spred2) from Xenopus tropicalis (Western clawed frog).